We begin with the raw amino-acid sequence, 555 residues long: Urocanate hydratase (555 aa).

Residues 51–52 (GG), Gln129, 175–177 (GMG), Glu195, 262–266 (QTSAH), 272–273 (YL), and Tyr321 each bind NAD(+). The active site involves Cys409. Gly491 contributes to the NAD(+) binding site.

Belongs to the urocanase family. The cofactor is NAD(+).

It localises to the cytoplasm. It catalyses the reaction 4-imidazolone-5-propanoate = trans-urocanate + H2O. It participates in amino-acid degradation; L-histidine degradation into L-glutamate; N-formimidoyl-L-glutamate from L-histidine: step 2/3. Catalyzes the conversion of urocanate to 4-imidazolone-5-propionate. In Stenotrophomonas maltophilia (strain R551-3), this protein is Urocanate hydratase.